A 195-amino-acid chain; its full sequence is Pyruvoyl-dependent arginine decarboxylase AaxB (195 aa).

Ser53 is modified (pyruvic acid (Ser)).

It belongs to the pyruvoyl-dependent arginine decarboxylase family. In terms of assembly, trimer of an alpha-beta dimer. Pyruvate is required as a cofactor.

It localises to the cytoplasm. The enzyme catalyses L-arginine + H(+) = agmatine + CO2. Functionally, part of the AaxABC system, catalyzes the decarboxylation of L-arginine. The arginine uptake by the bacterium in the macrophage may be a virulence factor against the host innate immune response. The protein is Pyruvoyl-dependent arginine decarboxylase AaxB (aaxB) of Chlamydia abortus (strain DSM 27085 / S26/3) (Chlamydophila abortus).